The chain runs to 368 residues: Endophilin-A2 (368 aa).

Positions 1 to 21 (MSVAGLKKQFYKASQLVSEKV) are membrane-binding amphipathic helix. A BAR domain is found at 18 to 249 (SEKVGGAEGT…LKRRMREASS (232 aa)). The segment at 60-87 (PNPASRAKLTMLNTVSKIRGQVKNPGYP) is required for dimerization upon membrane association. Residues 181-250 (EELRQAMEKF…KRRMREASSR (70 aa)) are a coiled coil. The interval 218 to 254 (LVDAQLDYHRQAVQILDELADKLKRRMREASSRPKRE) is interaction with ARC. The tract at residues 243–308 (RMREASSRPK…PSRSMPPLDQ (66 aa)) is disordered. Residues 245–263 (REASSRPKREYKPKPRELL) show a composition bias toward basic and acidic residues. A phosphoserine mark is found at serine 288 and serine 292. Threonine 298 carries the post-translational modification Phosphothreonine. In terms of domain architecture, SH3 spans 306 to 365 (LDQPSCKALYDFEPENDGELGFHEGDIITLTNQIDENWYEGMLDGQSGFFPLSYVEVLVP). Tyrosine 315 carries the post-translational modification Phosphotyrosine.

This sequence belongs to the endophilin family. Interacts with ARC, SYNJ1 and DNM1. Interacts with PDCD6IP. Interacts with BIN2.

It is found in the cytoplasm. The protein localises to the early endosome membrane. It localises to the cell projection. Its subcellular location is the podosome. Functionally, implicated in endocytosis. May recruit other proteins to membranes with high curvature. The chain is Endophilin-A2 from Bos taurus (Bovine).